The following is a 166-amino-acid chain: NAD(P)H-quinone oxidoreductase subunit I, chloroplastic (166 aa).

4Fe-4S ferredoxin-type domains are found at residues 55-84 (GRIH…VDWK) and 95-124 (LNYS…MTEE). [4Fe-4S] cluster contacts are provided by Cys64, Cys67, Cys70, Cys74, Cys104, Cys107, Cys110, and Cys114.

It belongs to the complex I 23 kDa subunit family. NDH is composed of at least 16 different subunits, 5 of which are encoded in the nucleus. [4Fe-4S] cluster is required as a cofactor.

The protein localises to the plastid. It localises to the chloroplast thylakoid membrane. The catalysed reaction is a plastoquinone + NADH + (n+1) H(+)(in) = a plastoquinol + NAD(+) + n H(+)(out). It carries out the reaction a plastoquinone + NADPH + (n+1) H(+)(in) = a plastoquinol + NADP(+) + n H(+)(out). Its function is as follows. NDH shuttles electrons from NAD(P)H:plastoquinone, via FMN and iron-sulfur (Fe-S) centers, to quinones in the photosynthetic chain and possibly in a chloroplast respiratory chain. The immediate electron acceptor for the enzyme in this species is believed to be plastoquinone. Couples the redox reaction to proton translocation, and thus conserves the redox energy in a proton gradient. The sequence is that of NAD(P)H-quinone oxidoreductase subunit I, chloroplastic from Polymnia canadensis (White-flowered leaf-cup).